The chain runs to 506 residues: Anaerobic nitric oxide reductase transcription regulator NorR (506 aa).

A 4-aspartylphosphate modification is found at D57. Positions 187–416 (MIGLSPAMTQ…LEHAIHRAVV (230 aa)) constitute a Sigma-54 factor interaction domain. ATP contacts are provided by residues 215 to 222 (GETGTGKE) and 278 to 287 (ADNGTLFLDE). Positions 481–500 (WAASARALETDVANLHRLAK) form a DNA-binding region, H-T-H motif.

Its pathway is nitrogen metabolism; nitric oxide reduction. Required for the expression of anaerobic nitric oxide (NO) reductase, acts as a transcriptional activator for at least the norVW operon. Activation also requires sigma-54. The sequence is that of Anaerobic nitric oxide reductase transcription regulator NorR from Salmonella gallinarum (strain 287/91 / NCTC 13346).